A 435-amino-acid polypeptide reads, in one-letter code: Adenylosuccinate synthetase (435 aa).

GTP contacts are provided by residues 22 to 28 and 50 to 52; these read GDEGKGK and GHT. Asp23 serves as the catalytic Proton acceptor. Residues Asp23 and Gly50 each coordinate Mg(2+). IMP contacts are provided by residues 23–26, 48–51, Thr140, Arg154, Gln235, Thr250, and Arg314; these read DEGK and NAGH. His51 acts as the Proton donor in catalysis. Residue 310 to 316 participates in substrate binding; sequence ATTGRKR. GTP contacts are provided by residues Arg316, 342 to 344, and 424 to 426; these read KLD and SVG.

This sequence belongs to the adenylosuccinate synthetase family. As to quaternary structure, homodimer. It depends on Mg(2+) as a cofactor.

The protein localises to the cytoplasm. It catalyses the reaction IMP + L-aspartate + GTP = N(6)-(1,2-dicarboxyethyl)-AMP + GDP + phosphate + 2 H(+). It participates in purine metabolism; AMP biosynthesis via de novo pathway; AMP from IMP: step 1/2. Functionally, plays an important role in the de novo pathway of purine nucleotide biosynthesis. Catalyzes the first committed step in the biosynthesis of AMP from IMP. The polypeptide is Adenylosuccinate synthetase (Chlorobaculum tepidum (strain ATCC 49652 / DSM 12025 / NBRC 103806 / TLS) (Chlorobium tepidum)).